The chain runs to 251 residues: Cytochrome c oxidase subunit 2 (251 aa).

The first 15 residues, 1-15 (MLNLLYNQIFNVILN), serve as a signal peptide directing secretion. Over 16–41 (DVPTPYNTYFQDSATPNQEGILELHD) the chain is Mitochondrial intermembrane. A helical membrane pass occupies residues 42–62 (NIMFYLLVILGLVSWLLFTIT). Topologically, residues 63–82 (RTYSKNPIAYKYIKHGQTIE) are mitochondrial matrix. The chain crosses the membrane as a helical span at residues 83-103 (IIWTIFPAVILLIIAFPSFIL). Residues 104–251 (LYLCDEVISP…PAFLEWLNEQ (148 aa)) are Mitochondrial intermembrane-facing. Residues histidine 186, cysteine 221, glutamate 223, cysteine 225, histidine 229, and methionine 232 each coordinate Cu cation. Glutamate 223 is a Mg(2+) binding site.

It belongs to the cytochrome c oxidase subunit 2 family. As to quaternary structure, component of the cytochrome c oxidase (complex IV, CIV), a multisubunit enzyme composed of a catalytic core of 3 subunits and several supernumerary subunits. The complex exists as a monomer or a dimer and forms supercomplexes (SCs) in the inner mitochondrial membrane with ubiquinol-cytochrome c oxidoreductase (cytochrome b-c1 complex, complex III, CIII). Cu cation is required as a cofactor. Post-translationally, the signal sequence of COX2 is processed by IMP1.

The protein localises to the mitochondrion inner membrane. It catalyses the reaction 4 Fe(II)-[cytochrome c] + O2 + 8 H(+)(in) = 4 Fe(III)-[cytochrome c] + 2 H2O + 4 H(+)(out). Component of the cytochrome c oxidase, the last enzyme in the mitochondrial electron transport chain which drives oxidative phosphorylation. The respiratory chain contains 3 multisubunit complexes succinate dehydrogenase (complex II, CII), ubiquinol-cytochrome c oxidoreductase (cytochrome b-c1 complex, complex III, CIII) and cytochrome c oxidase (complex IV, CIV), that cooperate to transfer electrons derived from NADH and succinate to molecular oxygen, creating an electrochemical gradient over the inner membrane that drives transmembrane transport and the ATP synthase. Cytochrome c oxidase is the component of the respiratory chain that catalyzes the reduction of oxygen to water. Electrons originating from reduced cytochrome c in the intermembrane space (IMS) are transferred via the dinuclear copper A center (CU(A)) of subunit 2 and heme A of subunit 1 to the active site in subunit 1, a binuclear center (BNC) formed by heme A3 and copper B (CU(B)). The BNC reduces molecular oxygen to 2 water molecules using 4 electrons from cytochrome c in the IMS and 4 protons from the mitochondrial matrix. This is Cytochrome c oxidase subunit 2 (COX2) from Lachancea thermotolerans (strain ATCC 56472 / CBS 6340 / NRRL Y-8284) (Yeast).